Consider the following 220-residue polypeptide: U1 small nuclear ribonucleoprotein C (220 aa).

The Matrin-type zinc finger occupies 4–36; the sequence is FFCDYCDVYLTHDSISVRKAHNSGRNHLRNVVD. The disordered stretch occupies residues 197–220; the sequence is PLGGFPAGAPLPGAPPGYGPPGAK. Over residues 208-220 the composition is skewed to pro residues; that stretch reads PGAPPGYGPPGAK.

It belongs to the U1 small nuclear ribonucleoprotein C family. U1 snRNP is composed of the 7 core Sm proteins B/B', D1, D2, D3, E, F and G that assemble in a heptameric protein ring on the Sm site of the small nuclear RNA to form the core snRNP, and at least 3 U1 snRNP-specific proteins U1-70K, U1-A and U1-C. U1-C interacts with U1 snRNA and the 5' splice-site region of the pre-mRNA.

It localises to the nucleus. Component of the spliceosomal U1 snRNP, which is essential for recognition of the pre-mRNA 5' splice-site and the subsequent assembly of the spliceosome. U1-C is directly involved in initial 5' splice-site recognition for both constitutive and regulated alternative splicing. The interaction with the 5' splice-site seems to precede base-pairing between the pre-mRNA and the U1 snRNA. Stimulates commitment or early (E) complex formation by stabilizing the base pairing of the 5' end of the U1 snRNA and the 5' splice-site region. The sequence is that of U1 small nuclear ribonucleoprotein C from Tuber melanosporum (strain Mel28) (Perigord black truffle).